The following is a 433-amino-acid chain: MRDKISESTQKIFHAVWERIAPFHEMIQSRPAVLSYSGGKDSSILLHFYFWLWIEKKIPAPCIYHLDHSIRFNLEQEKKIFEYADSTFPFSKIFKKKNIPALSRRLGKTLEETGRAFRYKDLKKISDQYEGYIVTGHHSSDYLETILLNLIRGGGWNSLRTLGWYEKNRFRPLFAFSQEEIETILQSEFWKIFEDESNNSDEYLRNRIRSYIIPLLLREGANPDRIYKNFHRIEKPVSKIFSKKNSDHKIPSFLKIDIWVLNDLSQRERKFFIDRYLRSLNLYPTTRNFFRDLTDLLQKENSFSLENKETWFWKSTSSDLYLIPKNSPCLREFRFEPKEMVLKWNGNQKKIPPDLIPDLCPAGAKIRKNGMSIEISEILRQKEIPVPVRKMLPILRGERKVDVICLSLWDPKIGDIVADREVEILPDFQEPGV.

37–42 lines the ATP pocket; that stretch reads SGGKDS.

Belongs to the tRNA(Ile)-lysidine synthase family.

It localises to the cytoplasm. It catalyses the reaction cytidine(34) in tRNA(Ile2) + L-lysine + ATP = lysidine(34) in tRNA(Ile2) + AMP + diphosphate + H(+). Ligates lysine onto the cytidine present at position 34 of the AUA codon-specific tRNA(Ile) that contains the anticodon CAU, in an ATP-dependent manner. Cytidine is converted to lysidine, thus changing the amino acid specificity of the tRNA from methionine to isoleucine. This Leptospira interrogans serogroup Icterohaemorrhagiae serovar copenhageni (strain Fiocruz L1-130) protein is tRNA(Ile)-lysidine synthase.